A 681-amino-acid chain; its full sequence is Conserved oligomeric Golgi complex subunit 2 (681 aa).

It belongs to the COG2 family. As to quaternary structure, component of the conserved oligomeric Golgi complex which is composed of eight different subunits and is required for normal Golgi morphology and localization.

It localises to the golgi apparatus membrane. In terms of biological role, required for normal Golgi morphology and function. This Caenorhabditis elegans protein is Conserved oligomeric Golgi complex subunit 2 (cogc-2).